Consider the following 285-residue polypeptide: NAD kinase (285 aa).

The active-site Proton acceptor is the Asp66. NAD(+) contacts are provided by residues 66–67 (DG), 137–138 (ND), Arg148, Arg165, Asp167, and 178–183 (TAYSLS).

The protein belongs to the NAD kinase family. A divalent metal cation serves as cofactor.

Its subcellular location is the cytoplasm. It catalyses the reaction NAD(+) + ATP = ADP + NADP(+) + H(+). Functionally, involved in the regulation of the intracellular balance of NAD and NADP, and is a key enzyme in the biosynthesis of NADP. Catalyzes specifically the phosphorylation on 2'-hydroxyl of the adenosine moiety of NAD to yield NADP. In Prosthecochloris aestuarii (strain DSM 271 / SK 413), this protein is NAD kinase.